A 130-amino-acid polypeptide reads, in one-letter code: Small ribosomal subunit protein uS17m (130 aa).

This sequence belongs to the universal ribosomal protein uS17 family. As to quaternary structure, component of the mitochondrial ribosome small subunit (28S) which comprises a 12S rRNA and about 30 distinct proteins.

The protein resides in the mitochondrion. The sequence is that of Small ribosomal subunit protein uS17m (MRPS17) from Bos taurus (Bovine).